Reading from the N-terminus, the 547-residue chain is Auxin transporter-like protein 3 (547 aa).

Topologically, residues 1–74 (MASGSSGGGY…DAWFSCASNQ (74 aa)) are cytoplasmic. A helical transmembrane segment spans residues 75 to 92 (VAQVLLTLPYSFAQLGMA). Residues 93 to 94 (SG) lie on the Extracellular side of the membrane. The chain crosses the membrane as a helical span at residues 95 to 115 (LLFQLFYGLLGSWTAYLISIL). At 116–151 (YLEYRTRKERDKVDFRNHVIQWFEVLDGLLGRHWRN) the chain is on the cytoplasmic side. Residues 152–172 (VGLAFNCTFLLFGSVIQLIGC) form a helical membrane-spanning segment. The Extracellular portion of the chain corresponds to 173 to 187 (ASNIYYINDHLDKRT). The helical transmembrane segment at 188-208 (WTYIFGACCATTVFIPSFHNY) threads the bilayer. Residues 209–211 (RIW) are Cytoplasmic-facing. Residues 212–232 (SFLGLLMTTYTAWYIAVASLI) form a helical membrane-spanning segment. Residues 233 to 247 (HGQVEGVAHSGPTSI) lie on the Extracellular side of the membrane. Residues 248–268 (VLYFTGATNILYTFGGHAVTV) traverse the membrane as a helical segment. The Cytoplasmic portion of the chain corresponds to 269–281 (EIMHAMWRPQKFK). A helical transmembrane segment spans residues 282-302 (AIYLLATVYVLTLTLPSASAA). Residues 303-329 (YWAFGDALLTHSNALALLPRTPWRDAA) lie on the Extracellular side of the membrane. Residues 330–350 (VVLMLIHQFITFGFACTPLYF) form a helical membrane-spanning segment. Over 351–371 (VWEKLVGLHGCPSLCKRAAAR) the chain is Cytoplasmic. Residues 372 to 392 (LPVVLPIWFLAIIFPFFGPIN) form a helical membrane-spanning segment. Residue serine 393 is a topological domain, extracellular. The helical transmembrane segment at 394–414 (AVGSLLVSFTVYIIPSLAYMV) threads the bilayer. Residues 415–440 (TFRSPQSRQNAVERPPRFAGGWTGAY) are Cytoplasmic-facing. A helical transmembrane segment spans residues 441-461 (VINSFVVAWVLVVGFGFGGWA). At 462-547 (SITNFVHQVD…HHHRHHRHGL (86 aa)) the chain is on the extracellular side. Asparagine 509 carries an N-linked (GlcNAc...) asparagine glycan.

The protein belongs to the amino acid/polyamine transporter 2 family. Amino acid/auxin permease (AAAP) (TC 2.A.18.1) subfamily.

The protein resides in the cell membrane. Its function is as follows. Carrier protein involved in proton-driven auxin influx. May mediate the formation of auxin gradient from developing leaves (site of auxin biosynthesis) to tips. This is Auxin transporter-like protein 3 from Oryza sativa subsp. japonica (Rice).